The primary structure comprises 309 residues: MRRKKISIVGAGNVGATCAHWIAAKELGDIVLLDVAEGVPQGKALDLMEAAPVEGFDCMITGTNDYRDTAGSDVAVITAGVARKPGMSRDDLVSINVKIVRQAAAEIARYSPDALIIVVTNPLDVMCYVAYKASGLPRGKVFGMSGILDGARFRTFVALELGISFEDVTTLVLGGHGDHMVPLVRYTYAGAIPVEKLIPADRLAELVQRTRQGGAEIVELLKTGSAYYAPGAAITQMLEAVLKDKKRILPCAAYLDGEYGHRDICAGVPTIVGAGGIERIIELELTAEEQAAFDRSVSAVRGVLKGLDI.

Residues 10-15 and Asp34 each bind NAD(+); that span reads GAGNVG. Arg83 and Arg89 together coordinate substrate. NAD(+)-binding positions include Asn96 and 119–121; that span reads VTN. Asn121 and Arg152 together coordinate substrate. His176 acts as the Proton acceptor in catalysis.

The protein belongs to the LDH/MDH superfamily. MDH type 3 family.

It catalyses the reaction (S)-malate + NAD(+) = oxaloacetate + NADH + H(+). Its function is as follows. Catalyzes the reversible oxidation of malate to oxaloacetate. This is Malate dehydrogenase from Desulforudis audaxviator (strain MP104C).